The sequence spans 561 residues: Cloacin (561 aa).

Composition is skewed to gly residues over residues methionine 1 to alanine 21, serine 29 to threonine 40, and phenylalanine 66 to glutamine 91. 5 disordered regions span residues methionine 1 to serine 93, proline 254 to glycine 273, valine 304 to glycine 326, lysine 432 to arginine 507, and arginine 530 to leucine 561. The tract at residues methionine 1–threonine 180 is involved in the translocation of the protein across the cell membrane. The responsible for the receptor binding activity stretch occupies residues aspartate 200–serine 420. Basic and acidic residues-rich tracts occupy residues glutamine 306–glycine 326 and glutamate 440–proline 494. Positions leucine 421–leucine 561 are ribonuclease activity. Residues phenylalanine 540–leucine 561 form a binding of immunity protein region.

Belongs to the cloacin colicin family.

In terms of biological role, inactivates ribosomes by hydrolyzing 16S RNA in 30S ribosomes at a specific site. Functionally, colicins are polypeptide toxins produced by and active against E.coli and closely related bacteria. This is Cloacin (ccl) from Escherichia coli.